The sequence spans 21 residues: Alpha-fibrinogenase A1 (21 aa).

It belongs to the peptidase S1 family. Snake venom subfamily. Monomer. Expressed by the venom gland.

It localises to the secreted. Its activity is regulated as follows. Inhibited by PMSF, bovine aprotinin (APR), and soybean trypsin inhibitor (STI). Is not inhibited by EDTA, beta-mercaptoethanol, and high temperature (85 degrees Celsius). Snake venom serine protease that completely cleaves fibrinogen Aalpha chain (FGA), partially cleaves Bbeta chain (FGB) and has no activity on gamma chain. Is more potent that A2 and A3 alpha-fibrinogenases. Very active within 5 minutes. The sequence is that of Alpha-fibrinogenase A1 from Crotalus atrox (Western diamondback rattlesnake).